Reading from the N-terminus, the 562-residue chain is Cytosolic invertase 1 (562 aa).

Belongs to the glycosyl hydrolase 100 family.

The protein resides in the cytoplasm. It is found in the cytosol. It carries out the reaction Hydrolysis of terminal non-reducing beta-D-fructofuranoside residues in beta-D-fructofuranosides.. Functionally, cytosolic invertase that cleaves sucrose into glucose and fructose and is involved in the regulation of primary root elongation, lateral root formation, floral transition and pollen development. This Oryza sativa subsp. japonica (Rice) protein is Cytosolic invertase 1.